A 233-amino-acid polypeptide reads, in one-letter code: Putative N-acetylmannosamine-6-phosphate 2-epimerase (233 aa).

This sequence belongs to the NanE family.

It catalyses the reaction an N-acyl-D-glucosamine 6-phosphate = an N-acyl-D-mannosamine 6-phosphate. Its pathway is amino-sugar metabolism; N-acetylneuraminate degradation; D-fructose 6-phosphate from N-acetylneuraminate: step 3/5. In terms of biological role, converts N-acetylmannosamine-6-phosphate (ManNAc-6-P) to N-acetylglucosamine-6-phosphate (GlcNAc-6-P). This Yersinia pestis bv. Antiqua (strain Antiqua) protein is Putative N-acetylmannosamine-6-phosphate 2-epimerase.